Consider the following 223-residue polypeptide: Endonuclease V (223 aa).

Mg(2+) contacts are provided by Asp35 and Asp103.

This sequence belongs to the endonuclease V family. Requires Mg(2+) as cofactor.

Its subcellular location is the cytoplasm. The catalysed reaction is Endonucleolytic cleavage at apurinic or apyrimidinic sites to products with a 5'-phosphate.. In terms of biological role, DNA repair enzyme involved in the repair of deaminated bases. Selectively cleaves double-stranded DNA at the second phosphodiester bond 3' to a deoxyinosine leaving behind the intact lesion on the nicked DNA. The chain is Endonuclease V from Escherichia coli O139:H28 (strain E24377A / ETEC).